The chain runs to 108 residues: Nucleoid-associated protein Rmet_2128 (108 aa).

A compositionally biased stretch (polar residues) spans 86-96 (TTQEKMGSMTS). The disordered stretch occupies residues 86–108 (TTQEKMGSMTSGLPLPPGFKLPF). Over residues 99 to 108 (PLPPGFKLPF) the composition is skewed to pro residues.

Belongs to the YbaB/EbfC family. In terms of assembly, homodimer.

The protein resides in the cytoplasm. It is found in the nucleoid. Binds to DNA and alters its conformation. May be involved in regulation of gene expression, nucleoid organization and DNA protection. This Cupriavidus metallidurans (strain ATCC 43123 / DSM 2839 / NBRC 102507 / CH34) (Ralstonia metallidurans) protein is Nucleoid-associated protein Rmet_2128.